A 473-amino-acid polypeptide reads, in one-letter code: SHC-transforming protein 1 (473 aa).

The interval methionine 1–arginine 26 is disordered. Residue serine 29 is modified to Phosphoserine. At lysine 44 the chain carries N6-acetyllysine. Residues methionine 46–glutamate 229 enclose the PID domain. The interval histidine 216–aspartate 314 is disordered. The CH1 stretch occupies residues glutamate 230–proline 377. Tyrosine 239, tyrosine 240, and tyrosine 317 each carry phosphotyrosine. The segment at glutamine 328–leucine 348 is disordered. Serine 343 is modified (phosphoserine). The region spanning tryptophan 378–valine 469 is the SH2 domain.

In terms of assembly, interacts with CPNE3; this interaction may mediate the binding of CPNE3 with ERBB2. Interacts with the Trk receptors NTRK1, NTRK2 and NTRK3; in a phosphotyrosine-dependent manner. Interacts with the NPXY motif of tyrosine-phosphorylated IGF1R and INSR in vitro via the PID domain. Once activated, binds to GRB2. Interacts with tyrosine-phosphorylated CD3T and DDR2. Interacts with the N-terminal region of APS. Interacts with phosphorylated LRP1 and IRS4. Interacts with INPP5D/SHIP1 and INPPL1/SHIP2. Interacts with ALK, GAB2, GRB7 and KIT. Interacts with PTPN6/SHP (tyrosine phosphorylated). Identified in a complex containing FGFR4, NCAM1, CDH2, PLCG1, FRS2, SRC, SHC1, GAP43 and CTTN. Interacts with FLT4 (tyrosine-phosphorylated). Interacts with EPHB1 and GRB2; activates the MAPK/ERK cascade to regulate cell migration. Interacts with PDGFRB (tyrosine-phosphorylated). Interacts with ERBB4. Interacts with TEK/TIE2 (tyrosine-phosphorylated). Interacts with PTK2/FAK1. Interacts with CEACAM1; this interaction is CEACAM1-phosphorylation-dependent and mediates interaction with EGFR or INSR resulting in decrease coupling of SHC1 to the MAPK3/ERK1-MAPK1/ERK2 pathway. Interacts (via PID domain) with PEAK1 (when phosphorylated). Found in a complex with PPP1CA, PPP1CC, SHC1 and PEAK1. In terms of processing, phosphorylated by activated epidermal growth factor receptor. Phosphorylated in response to KIT signaling. Tyrosine phosphorylated in response to FLT3 and FLT4 signaling and by ligand-activated ALK. Tyrosine phosphorylated by ligand-activated PDGFRB. Tyrosine phosphorylated by TEK/TIE2. May be tyrosine phosphorylated by activated PTK2/FAK1. Tyrosine phosphorylated by activated PTK2B/PYK2. Dephosphorylation by PTPN2 may regulate interaction with GRB2.

The protein resides in the cytoplasm. The protein localises to the cell junction. It localises to the focal adhesion. In terms of biological role, signaling adapter that couples activated growth factor receptors to signaling pathways. Participates in a signaling cascade initiated by activated KIT and KITLG/SCF. Participates in signaling downstream of the angiopoietin receptor TEK/TIE2, and plays a role in the regulation of endothelial cell migration and sprouting angiogenesis. This Bos taurus (Bovine) protein is SHC-transforming protein 1 (SHC1).